The chain runs to 276 residues: O-methyltransferase cnsE (276 aa).

S-adenosyl-L-methionine contacts are provided by residues Gln-110, 133–134, and His-155; that span reads DA.

It belongs to the methyltransferase superfamily. S-adenosyl-L-methionine is required as a cofactor.

It functions in the pathway alkaloid biosynthesis. In terms of biological role, O-methyltransferase; part of the gene cluster that mediates the biosynthesis of communesins, a prominent class of indole alkaloids with great potential as pharmaceuticals. Communesins are biosynthesized by the coupling of tryptamine and aurantioclavine, two building blocks derived from L-tryptophan. The L-tryptophan decarboxylase cnsB converts L-tryptophan to tryptamine, whereas the tryptophan dimethylallyltransferase cnsF converts L-tryptophan to 4-dimethylallyl tryptophan which is further transformed to aurantioclavine by the aurantioclavine synthase cnsA, probably aided by the catalase cnsD. The cytochrome P450 monooxygenase cnsC catalyzes the heterodimeric coupling between the two different indole moieties, tryptamine and aurantioclavine, to construct vicinal quaternary stereocenters and yield the heptacyclic communesin scaffold. The O-methyltransferase cnsE then methylates the communesin scaffold to produce communesin K, the simplest characterized communesin that contains the heptacyclic core. The dioxygenase cnsJ converts communesin K into communesin I. Acylation to introduce the hexadienyl group at position N16 of communesin I by the acyltransferase cnsK leads to the production of communesin B. The hexadienyl group is produced by the highly reducing polyketide synthase cnsI, before being hydrolytically removed from cnsI by the serine hydrolase cnsH, converted into hexadienyl-CoA by the CoA ligase cnsG, and then transferred to communesin I by cnsK. Surprisingly, cnsK may also be a promiscuous acyltransferase that can tolerate a range of acyl groups, including acetyl-, propionyl-, and butyryl-CoA, which lead to communesins A, G and H respectively. The roles of the alpha-ketoglutarate-dependent dioxygenases cnsM and cnsP have still to be determined. The protein is O-methyltransferase cnsE of Penicillium expansum (Blue mold rot fungus).